The chain runs to 479 residues: Altronate oxidoreductase (479 aa).

Residue 18–29 (IIQFGEGNFLRA) coordinates NAD(+).

Belongs to the mannitol dehydrogenase family. UxaB subfamily.

The enzyme catalyses D-altronate + NAD(+) = keto-D-tagaturonate + NADH + H(+). It functions in the pathway carbohydrate metabolism; pentose and glucuronate interconversion. This chain is Altronate oxidoreductase, found in Phocaeicola vulgatus (strain ATCC 8482 / DSM 1447 / JCM 5826 / CCUG 4940 / NBRC 14291 / NCTC 11154) (Bacteroides vulgatus).